A 983-amino-acid polypeptide reads, in one-letter code: Bifunctional glutamine synthetase adenylyltransferase/adenylyl-removing enzyme (983 aa).

Residues 1-468 are adenylyl removase; the sequence is MTVENAKALF…KQYAALFEQA (468 aa). An adenylyl transferase region spans residues 473 to 983; sequence AASGNLVFTG…FDKLVGHGAD (511 aa).

It belongs to the GlnE family. Mg(2+) serves as cofactor.

It carries out the reaction [glutamine synthetase]-O(4)-(5'-adenylyl)-L-tyrosine + phosphate = [glutamine synthetase]-L-tyrosine + ADP. The enzyme catalyses [glutamine synthetase]-L-tyrosine + ATP = [glutamine synthetase]-O(4)-(5'-adenylyl)-L-tyrosine + diphosphate. Functionally, involved in the regulation of glutamine synthetase GlnA, a key enzyme in the process to assimilate ammonia. When cellular nitrogen levels are high, the C-terminal adenylyl transferase (AT) inactivates GlnA by covalent transfer of an adenylyl group from ATP to specific tyrosine residue of GlnA, thus reducing its activity. Conversely, when nitrogen levels are low, the N-terminal adenylyl removase (AR) activates GlnA by removing the adenylyl group by phosphorolysis, increasing its activity. The regulatory region of GlnE binds the signal transduction protein PII (GlnB) which indicates the nitrogen status of the cell. In Brucella melitensis biotype 1 (strain ATCC 23456 / CCUG 17765 / NCTC 10094 / 16M), this protein is Bifunctional glutamine synthetase adenylyltransferase/adenylyl-removing enzyme.